The primary structure comprises 232 residues: Expansin-YoaJ (232 aa).

Residues 1–25 (MKKIMSAFVGMVLLTIFCFSPQASA) form the signal peptide. The 70-residue stretch at 58 to 127 (ITAINPADLN…MKDGKINIKW (70 aa)) folds into the Expansin-like EG45 domain.

It is found in the secreted. Its subcellular location is the cell wall. May promote colonization of plant roots. May cause loosening and extension of plant cell walls by disrupting non-covalent bonding between cellulose microfibrils and matrix glucans. Has very low expansin activity (in vitro). No enzymatic activity has been found. Binds to peptidoglycan and to plant cell walls. The protein is Expansin-YoaJ (yoaJ) of Bacillus subtilis (strain 168).